A 274-amino-acid chain; its full sequence is UPF0758 protein RHE_CH01848 (274 aa).

The segment at 1-37 (MAKGPVATSSDDELPFETEEPVADERSFFGGRPQKPA) is disordered. Over residues 10–22 (SDDELPFETEEPV) the composition is skewed to acidic residues. One can recognise an MPN domain in the interval 152-274 (VLSSWSSVIQ…HVSLKGLKLI (123 aa)). Zn(2+)-binding residues include histidine 223, histidine 225, and aspartate 236. Positions 223 to 236 (HNHPSGDPTPSRAD) match the JAMM motif motif.

The protein belongs to the UPF0758 family.

The protein is UPF0758 protein RHE_CH01848 of Rhizobium etli (strain ATCC 51251 / DSM 11541 / JCM 21823 / NBRC 15573 / CFN 42).